Consider the following 139-residue polypeptide: Tetra-peptide repeat homeobox-like protein (139 aa).

Disordered regions lie at residues M1 to Q22 and E78 to Q139. A DNA-binding region (homeobox) is located at residues Q20–R79. Over residues Q82–Q139 the composition is skewed to low complexity.

Belongs to the paired homeobox family.

The protein localises to the nucleus. In terms of biological role, transcription factor required for zygotic genome activation (ZGA), a critical event in early embryonic development during which the developmental control passes from maternally provided mRNAs to the expression of the zygotic genome after fertilization. Protein produced from maternal transcripts that binds and activates expression of key ZGA marker genes, such as NANOGNB, ZSCAN4, DUXB, KLF5 and DPPA3. Binds to regulatory DNA sequences containing a 5'-TAATCC-3' sequence motif. This chain is Tetra-peptide repeat homeobox-like protein, found in Homo sapiens (Human).